The sequence spans 127 residues: UPF0716 protein YtzA (127 aa).

The next 4 helical transmembrane spans lie at 3–22 (FLFL…FLFL), 26–46 (IGIL…AAAA), 70–90 (AIAD…PGFL), and 93–115 (LAGA…FKWL).

Belongs to the UPF0716 (FxsA) family.

The protein localises to the cell membrane. The protein is UPF0716 protein YtzA (ytzA) of Bacillus subtilis (strain 168).